A 228-amino-acid chain; its full sequence is Cytidylate kinase (228 aa).

ATP is bound at residue 17-25 (GPTASGKGT).

Belongs to the cytidylate kinase family. Type 1 subfamily.

It localises to the cytoplasm. It catalyses the reaction CMP + ATP = CDP + ADP. The catalysed reaction is dCMP + ATP = dCDP + ADP. The sequence is that of Cytidylate kinase from Burkholderia ambifaria (strain ATCC BAA-244 / DSM 16087 / CCUG 44356 / LMG 19182 / AMMD) (Burkholderia cepacia (strain AMMD)).